The chain runs to 279 residues: Phospholipase A and acyltransferase 5 (279 aa).

2 disordered regions span residues 1-53 (MGLS…GLNS) and 70-117 (QLPA…ENEG). A compositionally biased stretch (polar residues) spans 97–106 (LETTPSQKAD). The LRAT domain maps to 135–249 (LIEIFRIGYE…LRYGVPRSQQ (115 aa)). Residues H145 and H157 contribute to the active site. C233 serves as the catalytic Acyl-thioester intermediate.

The protein belongs to the H-rev107 family. In terms of tissue distribution, highest expression level in testis and pancreas.

The protein localises to the cytoplasm. Its subcellular location is the cytosol. It catalyses the reaction a 1,2-diacyl-sn-glycero-3-phosphocholine + H2O = a 1-acyl-sn-glycero-3-phosphocholine + a fatty acid + H(+). The enzyme catalyses a 1,2-diacyl-sn-glycero-3-phosphocholine + H2O = a 2-acyl-sn-glycero-3-phosphocholine + a fatty acid + H(+). The catalysed reaction is 1-hexadecanoyl-2-(5Z,8Z,11Z,14Z-eicosatetraenoyl)-sn-glycero-3-phosphocholine + 1,2-di-(9Z-octadecenoyl)-sn-glycero-3-phosphoethanolamine = N-(5Z,8Z,11Z,14Z-eicosatetraenoyl)-1,2-di-(9Z-octadecenoyl)-sn-glycero-3-phosphoethanolamine + 1-hexadecanoyl-sn-glycero-3-phosphocholine + H(+). It carries out the reaction 1,2-di-(9Z-octadecenoyl)-sn-glycero-3-phosphoethanolamine + 1,2-dihexadecanoyl-sn-glycero-3-phosphocholine = N-hexadecanoyl-1,2-di-(9Z-octadecenoyl)-sn-glycero-3-phosphoethanolamine + 1-hexadecanoyl-sn-glycero-3-phosphocholine + H(+). It catalyses the reaction 1,2-di-(9Z-octadecenoyl)-sn-glycero-3-phosphoethanolamine + 1,2-dihexadecanoyl-sn-glycero-3-phosphocholine = N-hexadecanoyl-1,2-di-(9Z-octadecenoyl)-sn-glycero-3-phosphoethanolamine + 2-hexadecanoyl-sn-glycero-3-phosphocholine + H(+). The enzyme catalyses a 1,2-diacyl-sn-glycero-3-phosphoethanolamine + a 1,2-diacyl-sn-glycero-3-phosphocholine = an N-acyl-1,2-diacyl-sn-glycero-3-phosphoethanolamine + a 1-acyl-sn-glycero-3-phosphocholine + H(+). The catalysed reaction is a 1,2-diacyl-sn-glycero-3-phosphoethanolamine + a 1,2-diacyl-sn-glycero-3-phosphocholine = an N-acyl-1,2-diacyl-sn-glycero-3-phosphoethanolamine + a 2-acyl-sn-glycero-3-phosphocholine + H(+). It carries out the reaction 1-hexadecanoyl-2-(9Z-octadecenoyl)-sn-glycero-3-phosphocholine + 1,2-di-(9Z-octadecenoyl)-sn-glycero-3-phosphoethanolamine = N,1,2-tri-(9Z-octadecenoyl)-sn-glycero-3-phosphoethanolamine + 1-hexadecanoyl-sn-glycero-3-phosphocholine + H(+). Its function is as follows. Exhibits both phospholipase A1/2 and acyltransferase activities. Shows phospholipase A1 (PLA1) and A2 (PLA2) activity, catalyzing the calcium-independent release of fatty acids from the sn-1 or sn-2 position of glycerophospholipids. Shows N-acyltransferase activity, catalyzing the calcium-independent transfer of a fatty acyl group at the sn-1 position of phosphatidylcholine (PC) and other glycerophospholipids to the primary amine of phosphatidylethanolamine (PE), forming N-acylphosphatidylethanolamine (NAPE), which serves as precursor for N-acylethanolamines (NAEs). The chain is Phospholipase A and acyltransferase 5 from Homo sapiens (Human).